Here is a 784-residue protein sequence, read N- to C-terminus: Copal-8-ol diphosphate hydratase TPSSA9, chloroplastic (784 aa).

R240 contributes to the substrate binding site. 2 residues coordinate Mg(2+): D372 and D374. A DXDD motif motif is present at residues 372–375 (DIDD). R459 contacts substrate.

This sequence belongs to the terpene synthase family.

The protein localises to the plastid. It localises to the chloroplast. It catalyses the reaction (2E,6E,10E)-geranylgeranyl diphosphate + H2O = 8-hydroxycopalyl diphosphate. It participates in secondary metabolite biosynthesis; terpenoid biosynthesis. Functionally, involved in the biosynthesis of labdane-type diterpenoid including sclareol, a diterpene-diol that is used as fragrance and flavoring, and has anticancer effects (able to kill leukemic and colon cancer cells by apoptosis). Sclareol can also be used as synthesis precursor of ambergris substitution fragance products such as ambrox. Terpene synthase that produces 8-hydroxycopalyl diphosphate from geranylgeranyl diphosphate (GGPP). The protein is Copal-8-ol diphosphate hydratase TPSSA9, chloroplastic of Salvia sclarea (Clary sage).